We begin with the raw amino-acid sequence, 168 residues long: MLNNKNRNVGRLTVLCCLFAANTFADVQILGSESELSQTIADQYQQNVTLFNGQLNSNDVLYVNVGTATDDEITQAKSHIISGSTVVIDLTQIAGDDARLDWSQKLTGLGLSAPVVVTGVYQGDALVNAIVSDVTDENDNPINDPQAELESVKLSLTHALDRFQSEGK.

This Vibrio vulnificus (strain CMCP6) protein is Cytolysin secretion protein (vvhB).